The chain runs to 379 residues: (R)-2-hydroxyglutaryl-CoA dehydratase, subunit beta (379 aa).

Belongs to the FldB/FldC dehydratase alpha/beta subunit family. The (R)-2-hydroxyglutaryl-CoA dehydratase enzyme system is a heterodimer composed of an alpha subunit (HgdA) and a beta subunit (HgdB). It depends on [4Fe-4S] cluster as a cofactor. FMN is required as a cofactor. Mg(2+) serves as cofactor.

It is found in the cytoplasm. The enzyme catalyses (R)-2-hydroxyglutaryl-CoA = (2E)-glutaconyl-CoA + H2O. It participates in amino-acid degradation; L-glutamate degradation via hydroxyglutarate pathway; crotonoyl-CoA from L-glutamate: step 4/5. With respect to regulation, activated by the HgdC. Reversibly inactivated by oxidants such as 2-nitrophenol, 3-nitrophenol, 4-nitrophenol, 4-nitrobenzoate, carbonyl cyanide 4-(trifluoromethoxy)phenylhydrazone (FCCP) and chloramphenicol. Irreversibly inactivated by oxidants such as hydroxylamine and nitrite. In terms of biological role, involved in the fermentation of L-glutamate via the hydroxyglutarate pathway. Catalyzes the reversible syn-elimination of water from (R)-2-hydroxyglutaryl-CoA to yield (E)-glutaconyl-CoA. The dehydration mechanism involves a transient one electron reduction of the thioester from (R)-2-hydroxyglutaryl-CoA, generating a ketyl radical. Prior to (E)-glutaconyl-CoA formation, the ketyl radical is subsequently reoxidized by electron transfer back to the HgdA-HgdB complex (CompD) to avoid change in oxidation state of the substrate. The appropriate redox state of dehydratase HgdA-HgdB complex (CompD) is maintained by HgdC (CompA) via hydrolysis of ATP and ATP-dependent electron transfer. Since the electron is recycled, the dehydratase is able to perform several turnovers with only catalytic amounts of ATP and substoichiometric amounts of HgdC (CompA). This Acidaminococcus fermentans (strain ATCC 25085 / DSM 20731 / CCUG 9996 / CIP 106432 / VR4) protein is (R)-2-hydroxyglutaryl-CoA dehydratase, subunit beta.